The following is a 245-amino-acid chain: Probable phosphatase YcdX (245 aa).

Residues H7, H9, H15, H40, E73, H101, H131, D192, and H194 each contribute to the Zn(2+) site.

It belongs to the PHP family. In terms of assembly, homotrimer. Requires Zn(2+) as cofactor.

The protein is Probable phosphatase YcdX of Shigella dysenteriae serotype 1 (strain Sd197).